Here is a 331-residue protein sequence, read N- to C-terminus: Probable allantoicase (331 aa).

It belongs to the allantoicase family.

It catalyses the reaction allantoate + H2O = (S)-ureidoglycolate + urea. Its pathway is nitrogen metabolism; (S)-allantoin degradation; (S)-ureidoglycolate from allantoate (aminidohydrolase route): step 1/1. This chain is Probable allantoicase, found in Pseudomonas savastanoi pv. phaseolicola (strain 1448A / Race 6) (Pseudomonas syringae pv. phaseolicola (strain 1448A / Race 6)).